Consider the following 131-residue polypeptide: Profilin-2 (131 aa).

It belongs to the profilin family. In terms of assembly, occurs in many kinds of cells as a complex with monomeric actin in a 1:1 ratio.

Its subcellular location is the cytoplasm. The protein resides in the cytoskeleton. Its function is as follows. Binds to actin and affects the structure of the cytoskeleton. At high concentrations, profilin prevents the polymerization of actin, whereas it enhances it at low concentrations. By binding to PIP2, it inhibits the formation of IP3 and DG. The sequence is that of Profilin-2 from Ambrosia artemisiifolia (Common ragweed).